The following is a 168-amino-acid chain: CASP-like protein UU-1 (168 aa).

Residues 1–17 (MVELESQEAVTVASTAD) lie on the Cytoplasmic side of the membrane. The chain crosses the membrane as a helical span at residues 18-38 (IAVDVSLRLLAAATSLAAAVV). Topologically, residues 39 to 54 (VAANHQQRWGIRVDFT) are extracellular. A helical transmembrane segment spans residues 55–75 (LFQVWIGFVAVNLVCTVYAAA). Over 76 to 95 (TAAAAARKAMGRWWLHHADA) the chain is Cytoplasmic. Residues 96 to 116 (VVVNLEAAATAGAGAIGSIAM) traverse the membrane as a helical segment. Over 117 to 136 (WGNEASGWYAVCRLYRRYCN) the chain is Extracellular. A helical transmembrane segment spans residues 137 to 157 (AGAAALALSLAAVLLLGVACA). Residues 158 to 168 (RSRYPKMPPTT) are Cytoplasmic-facing.

Belongs to the Casparian strip membrane proteins (CASP) family. In terms of assembly, homodimer and heterodimers.

It is found in the cell membrane. This Oryza sativa subsp. japonica (Rice) protein is CASP-like protein UU-1.